A 212-amino-acid polypeptide reads, in one-letter code: Deoxyribose-phosphate aldolase (212 aa).

The Proton donor/acceptor role is filled by D89. The active-site Schiff-base intermediate with acetaldehyde is the K151. K180 (proton donor/acceptor) is an active-site residue.

Belongs to the DeoC/FbaB aldolase family. DeoC type 1 subfamily.

It is found in the cytoplasm. The enzyme catalyses 2-deoxy-D-ribose 5-phosphate = D-glyceraldehyde 3-phosphate + acetaldehyde. Its pathway is carbohydrate degradation; 2-deoxy-D-ribose 1-phosphate degradation; D-glyceraldehyde 3-phosphate and acetaldehyde from 2-deoxy-alpha-D-ribose 1-phosphate: step 2/2. Catalyzes a reversible aldol reaction between acetaldehyde and D-glyceraldehyde 3-phosphate to generate 2-deoxy-D-ribose 5-phosphate. In Clostridium botulinum (strain Loch Maree / Type A3), this protein is Deoxyribose-phosphate aldolase.